Consider the following 122-residue polypeptide: Iron-sulfur cluster insertion protein ErpA (122 aa).

Iron-sulfur cluster is bound by residues cysteine 50, cysteine 114, and cysteine 116.

It belongs to the HesB/IscA family. In terms of assembly, homodimer. It depends on iron-sulfur cluster as a cofactor.

Required for insertion of 4Fe-4S clusters for at least IspG. The protein is Iron-sulfur cluster insertion protein ErpA of Alkalilimnicola ehrlichii (strain ATCC BAA-1101 / DSM 17681 / MLHE-1).